Here is a 466-residue protein sequence, read N- to C-terminus: Voltage-gated potassium channel regulatory subunit KCNG2 (466 aa).

At 1 to 174 the chain is on the cytoplasmic side; it reads MEPWPCSPGG…DVVDNPHSGL (174 aa). The disordered stretch occupies residues 131–155; it reads AEARAGPTERGAQGSPARALGPRGR. Residues 175 to 196 form a helical membrane-spanning segment; it reads AGKLFACVSVSFVAVTAVGLCL. At 197 to 217 the chain is on the extracellular side; that stretch reads STMPDIRAEEERGECSPKCRS. Residues 218-239 form a helical membrane-spanning segment; that stretch reads LFVLETVCVAWFSFEFLLRSLQ. Over 240-250 the chain is Cytoplasmic; sequence AESKCAFLRAP. The chain crosses the membrane as a helical span at residues 251 to 271; sequence LNIIDILALLPFYVSLLLGLA. The Extracellular portion of the chain corresponds to 272-283; it reads AGPGGTKLLERA. Residues 284–304 form a helical; Voltage-sensor membrane-spanning segment; that stretch reads GLVLRLLRALRVLYVMRLARH. The Cytoplasmic segment spans residues 305-319; it reads SLGLRSLGLTMRRCA. The chain crosses the membrane as a helical span at residues 320–341; sequence REFGLLLLFLCVAMALFAPLVH. The Extracellular segment spans residues 342–356; the sequence is LAERELGARRDFSSV. The segment at residues 357–368 is an intramembrane region (helical); that stretch reads PASYWWAVISMT. The Selectivity filter signature appears at 369-374; that stretch reads TVGYGD. Residues 369–376 lie within the membrane without spanning it; that stretch reads TVGYGDMV. At 377 to 383 the chain is on the extracellular side; sequence PRSLPGQ. Residues 384-412 form a helical membrane-spanning segment; that stretch reads VVALSSILSGILLMAFPVTSIFHTFSRSY. Over 413–466 the chain is Cytoplasmic; it reads SELKEQQQRAASPEPALQEDSTHSATATEDSSQGPDSAGLADDSADALWVRAGR. A disordered region spans residues 416–466; sequence KEQQQRAASPEPALQEDSTHSATATEDSSQGPDSAGLADDSADALWVRAGR. Polar residues predominate over residues 435-447; that stretch reads HSATATEDSSQGP. A compositionally biased stretch (low complexity) spans 448–460; it reads DSAGLADDSADAL.

This sequence belongs to the potassium channel family. G (TC 1.A.1.2) subfamily. Kv6.2/KCNG2 sub-subfamily. As to quaternary structure, heterodimer with KCNB1. As to expression, highly expressed in heart, liver, skeletal muscle, kidney and pancreas. Detected at low levels in brain, lung and placenta.

Its subcellular location is the cell membrane. Its function is as follows. Regulatory alpha-subunit of the voltage-gated potassium (Kv) channel which, when coassembled with KCNB1, can modulate the kinetics and conductance-voltage relationship. Modulates channel activity by shifting the threshold and the half-maximal activation to more negative values. Potassium channel subunit that does not form functional channels by itself. The protein is Voltage-gated potassium channel regulatory subunit KCNG2 of Homo sapiens (Human).